The chain runs to 293 residues: DDRGK domain-containing protein 1 (293 aa).

The Lumenal segment spans residues 1–6; that stretch reads MWGPLI. Residues 7-27 traverse the membrane as a helical segment; that stretch reads YALLGLAIVAAAFLFVRRSQA. At 28–293 the chain is on the cytoplasmic side; the sequence is KEVVPVADDD…PADVDETTTA (266 aa). 2 disordered regions span residues 30–151 and 273–293; these read VVPV…RQKE and TDVEFPGDEPAPADVDETTTA. Composition is skewed to basic and acidic residues over residues 90–126 and 133–151; these read KLQEKEERRRRNEEMAQAREQAKLLQHQEEEERKERE and ERQREAELEREREAQRQKE.

It belongs to the DDRGK1 family.

It localises to the endoplasmic reticulum membrane. In terms of biological role, substrate adapter for ufmylation, the covalent attachment of the ubiquitin-like modifier UFM1 to substrate proteins. The polypeptide is DDRGK domain-containing protein 1 (Monosiga brevicollis (Choanoflagellate)).